Here is a 528-residue protein sequence, read N- to C-terminus: Gamma-taxilin (528 aa).

The span at 1 to 10 shows a compositional bias: basic and acidic residues; it reads MATRVEEAAR. A disordered region spans residues 1 to 36; that stretch reads MATRVEEAARGRGGGAEEATEAGRGGRRRSPRQKFE. Omega-N-methylarginine is present on residues R12 and R24. 4 positions are modified to phosphoserine: S79, S86, S97, and S105. Positions 102–130 are disordered; it reads TQESREEIPGGEARTDPPDGQQDSECNRN. Basic and acidic residues predominate over residues 104–118; the sequence is ESREEIPGGEARTDP. The stretch at 153–464 forms a coiled coil; that stretch reads EEKLAALCKK…LKEQVSIKAA (312 aa). Position 283 is a phosphotyrosine (Y283). Residues 486–528 are disordered; it reads HKELNTSSKRALGAHLEAEPKSQRSAVQKPPSTGSAPAIESVD. Residues 508 to 520 show a composition bias toward polar residues; that stretch reads QRSAVQKPPSTGS. S517 bears the Phosphoserine mark.

This sequence belongs to the taxilin family. In terms of assembly, binds to the C-terminal coiled coil region of syntaxin family members STX1A, STX3A and STX4A. Forms a heterodimer with ATF4 in osteoblasts. In terms of tissue distribution, ubiquitously expressed. Expressed at high level in heart and skeletal muscle. Expressed in brain, placenta, lung, liver, kidney and pancreas.

The protein resides in the nucleus membrane. The protein localises to the cytoplasm. It localises to the cytosol. In terms of biological role, may be involved in intracellular vesicle traffic. Inhibits ATF4-mediated transcription, possibly by dimerizing with ATF4 to form inactive dimers that cannot bind DNA. May be involved in regulating bone mass density through an ATF4-dependent pathway. May be involved in cell cycle progression. The sequence is that of Gamma-taxilin (TXLNG) from Homo sapiens (Human).